Reading from the N-terminus, the 412-residue chain is Zinc finger protein 260 (412 aa).

13 C2H2-type zinc fingers span residues 27–49, 55–77, 83–105, 136–158, 164–186, 192–214, 220–242, 248–270, 276–298, 304–326, 332–354, 360–382, and 388–412; these read YECN…KKMH, HECT…LRSH, YKCN…QKHH, YACK…EKIH, FECN…QNIH, FKCS…QRIH, YECK…QRSH, YTCK…EKIH, YKCN…HNIH, YECN…VRIH, YECK…MRSH, YGCN…MRIH, and YQCS…IHTH.

The protein belongs to the krueppel C2H2-type zinc-finger protein family. As to quaternary structure, binds DNA. Interacts with GATA4.

It is found in the nucleus. Transcription factor that acts as a cardiac regulator and an effector of alpha1-adrenergic signaling. Binds to PE response elements (PERE) present in the promoter of genes such as ANF/NPPA and acts as a direct transcriptional activator of NPPA. Also acts as a cofactor with GATA4, a key cardiac regulator. This Homo sapiens (Human) protein is Zinc finger protein 260 (ZNF260).